Here is a 39-residue protein sequence, read N- to C-terminus: MTIDRTFPIFTVRWLAVHGLAVPTVSFLGSISAMQFIQR.

A helical transmembrane segment spans residues 14-30; it reads WLAVHGLAVPTVSFLGS. Histidine 18 contacts heme.

Belongs to the PsbE/PsbF family. As to quaternary structure, heterodimer of an alpha subunit and a beta subunit. PSII is composed of 1 copy each of membrane proteins PsbA, PsbB, PsbC, PsbD, PsbE, PsbF, PsbH, PsbI, PsbJ, PsbK, PsbL, PsbM, PsbT, PsbX, PsbY, PsbZ, Psb30/Ycf12, at least 3 peripheral proteins of the oxygen-evolving complex and a large number of cofactors. It forms dimeric complexes. It depends on heme b as a cofactor.

The protein localises to the plastid. It localises to the chloroplast thylakoid membrane. Its function is as follows. This b-type cytochrome is tightly associated with the reaction center of photosystem II (PSII). PSII is a light-driven water:plastoquinone oxidoreductase that uses light energy to abstract electrons from H(2)O, generating O(2) and a proton gradient subsequently used for ATP formation. It consists of a core antenna complex that captures photons, and an electron transfer chain that converts photonic excitation into a charge separation. The sequence is that of Cytochrome b559 subunit beta from Lotus japonicus (Lotus corniculatus var. japonicus).